Reading from the N-terminus, the 690-residue chain is Quinohemoprotein alcohol dehydrogenase ADH IIB (690 aa).

The signal sequence occupies residues 1 to 22; that stretch reads MKKPLRTSLLMLCLATPLAALA. Glu81 contacts pyrroloquinoline quinone. Cysteines 127 and 128 form a disulfide. Residues Arg133, Thr177, and 193-194 contribute to the pyrroloquinoline quinone site; that span reads GA. Position 195 (Glu195) interacts with Ca(2+). Thr252 is a binding site for pyrroloquinoline quinone. Ca(2+) is bound by residues Asn272 and Asp317. Asp317 serves as the catalytic Proton acceptor. Residues Lys344, 404–405, and Val547 each bind pyrroloquinoline quinone; that span reads NW. In terms of domain architecture, Cytochrome c spans 600-678; it reads EQVQAGKQLY…QIKLYVMSRE (79 aa). Residues Cys613, Cys616, His617, and Met655 each coordinate heme c.

It belongs to the bacterial PQQ dehydrogenase family. As to quaternary structure, monomer. Pyrroloquinoline quinone serves as cofactor. Ca(2+) is required as a cofactor. The cofactor is heme c.

It is found in the periplasm. The catalysed reaction is 2 oxidized [azurin] + a primary alcohol = 2 reduced [azurin] + an aldehyde + 2 H(+). With respect to regulation, inhibited by 10 mM 1-butanol. Catalyzes the dye-linked oxidation of primary alcohols to the corresponding aldehydes and the (subsequent) oxidation of the aldehydes to carboxylic acids. Exhibits activity with longer mono-alcohols (C-4 to C-7) but not with methanol or glycerol. Reacts with 1,2-propanediol and 1,3-propanediol but not with sugar alcohols such as D-sorbitol. The chain is Quinohemoprotein alcohol dehydrogenase ADH IIB from Pseudomonas putida (Arthrobacter siderocapsulatus).